Consider the following 293-residue polypeptide: Histamine N-methyltransferase A (293 aa).

Glu28 lines the substrate pocket. Positions 60, 89, 94, 120, and 142 each coordinate S-adenosyl-L-methionine. A substrate-binding site is contributed by Asn283.

This sequence belongs to the class I-like SAM-binding methyltransferase superfamily. HNMT family. In terms of assembly, monomer.

It is found in the cytoplasm. The enzyme catalyses histamine + S-adenosyl-L-methionine = N(tau)-methylhistamine + S-adenosyl-L-homocysteine + H(+). Functionally, inactivates histamine by N-methylation. Plays an important role in degrading histamine and in regulating the airway response to histamine. This chain is Histamine N-methyltransferase A (hnmt-a), found in Xenopus laevis (African clawed frog).